A 368-amino-acid chain; its full sequence is Phospho-N-acetylmuramoyl-pentapeptide-transferase (368 aa).

A run of 10 helical transmembrane segments spans residues 32–52 (TGGA…WIID), 79–99 (TPTM…VLWA), 102–122 (LNPY…IGFY), 142–160 (LLLE…TRLG), 176–196 (VALD…VGAG), 207–227 (GLAI…AYLA), 244–264 (AGEL…FLWF), 271–291 (IFMG…IAVA), 296–316 (IVLA…IVQV), and 345–365 (QIVI…LSTL).

The protein belongs to the glycosyltransferase 4 family. MraY subfamily. It depends on Mg(2+) as a cofactor.

Its subcellular location is the cell inner membrane. It carries out the reaction UDP-N-acetyl-alpha-D-muramoyl-L-alanyl-gamma-D-glutamyl-meso-2,6-diaminopimeloyl-D-alanyl-D-alanine + di-trans,octa-cis-undecaprenyl phosphate = di-trans,octa-cis-undecaprenyl diphospho-N-acetyl-alpha-D-muramoyl-L-alanyl-D-glutamyl-meso-2,6-diaminopimeloyl-D-alanyl-D-alanine + UMP. Its pathway is cell wall biogenesis; peptidoglycan biosynthesis. Its function is as follows. Catalyzes the initial step of the lipid cycle reactions in the biosynthesis of the cell wall peptidoglycan: transfers peptidoglycan precursor phospho-MurNAc-pentapeptide from UDP-MurNAc-pentapeptide onto the lipid carrier undecaprenyl phosphate, yielding undecaprenyl-pyrophosphoryl-MurNAc-pentapeptide, known as lipid I. This Nitrobacter winogradskyi (strain ATCC 25391 / DSM 10237 / CIP 104748 / NCIMB 11846 / Nb-255) protein is Phospho-N-acetylmuramoyl-pentapeptide-transferase.